Reading from the N-terminus, the 232-residue chain is Ribose-5-phosphate isomerase A (232 aa).

Residues 28–31, 83–86, and 96–99 each bind substrate; these read TGST, DGAD, and KGGG. Residue glutamate 105 is the Proton acceptor of the active site. Lysine 123 contributes to the substrate binding site.

The protein belongs to the ribose 5-phosphate isomerase family. In terms of assembly, homodimer.

It catalyses the reaction aldehydo-D-ribose 5-phosphate = D-ribulose 5-phosphate. The protein operates within carbohydrate degradation; pentose phosphate pathway; D-ribose 5-phosphate from D-ribulose 5-phosphate (non-oxidative stage): step 1/1. Its function is as follows. Catalyzes the reversible conversion of ribose-5-phosphate to ribulose 5-phosphate. This Rhodopseudomonas palustris (strain HaA2) protein is Ribose-5-phosphate isomerase A.